Here is a 224-residue protein sequence, read N- to C-terminus: MEIFLSIAINILIFWIGYLIGSLNASIIVGKLFYKKDVREFHSKNAGATNSLRVFGYKVAIVILFIDIFKVVFATYFVRIVFPFVFSPKLYFYIPLIAGLAAQIGQAYPIYFKFRGGKGVAATVGLLISINVLLWPIAGVFFFLLLFKTKYVSLSSLLTTLIMIGFISIPWMSQGVLSYATSGFGQFWVNIIIYLFAAALIFWKHRENIKRLLSKTENKMKFKK.

6 helical membrane passes run 3–23, 54–74, 90–112, 127–147, 152–172, and 183–203; these read IFLS…IGSL, VFGY…VVFA, LYFY…PIYF, LISI…LLLF, VSLS…IPWM, and GFGQ…LIFW.

Belongs to the PlsY family. In terms of assembly, probably interacts with PlsX.

It is found in the cell membrane. It carries out the reaction an acyl phosphate + sn-glycerol 3-phosphate = a 1-acyl-sn-glycero-3-phosphate + phosphate. It participates in lipid metabolism; phospholipid metabolism. Functionally, catalyzes the transfer of an acyl group from acyl-phosphate (acyl-PO(4)) to glycerol-3-phosphate (G3P) to form lysophosphatidic acid (LPA). This enzyme utilizes acyl-phosphate as fatty acyl donor, but not acyl-CoA or acyl-ACP. In Mycoplasmopsis synoviae (strain 53) (Mycoplasma synoviae), this protein is Glycerol-3-phosphate acyltransferase.